The sequence spans 53 residues: HOXB-AS3 peptide (53 aa).

The tract at residues 1–53 is disordered; it reads MPVLPGTQRYPHQRRRFQAAGGGAESGKRGSEEAPGVAWSGSESGRDAATPAW.

As to quaternary structure, interacts with HNRNPA1 (via the RGG-box). Interacts with IGF2BP2.

Its function is as follows. Blocks the binding of HNRNPA1 to the intronic sequences flanking exon 9 of the PKM gene by competitively binding to the HNRNPA1 RGG-box motif. This inhibits inclusion of exon 9 and promotes inclusion of exon 10, suppressing formation of the PKM M2 isoform and promoting production of the M1 isoform. Also suppresses HNRNPA1-mediated processing of microRNA 18a (miR-18a). Promotes MYC stability through interaction with IGF2BP2. In Homo sapiens (Human), this protein is HOXB-AS3 peptide.